The following is a 732-amino-acid chain: MSETSRTAFGGRRAVPPNNSNAAEDDLPTVELQGVVPRGVNLQEFLNVTSVHLFKERWDTNKVDHHTDKYENNKLIVRRGQSFYVQIDFSRPYDPRRDLFRVEYVIGRYPQENKGTYIPVPIVSELQSGKWGAKIVMREDRSVRLSIQSSPKCIVGKFRMYVAVWTPYGVLRTSRNPETDTYILFNPWCEDDAVYLDNEKEREEYVLNDIGVIFYGEVNDIKTRSWSYGQFEDGILDTCLYVMDRAQMDLSGRGNPIKVSRVGSAMVNAKDDEGVLVGSWDNIYAYGVPPSAWTGSVDILLEYRSSENPVRYGQCWVFAGVFNTFLRCLGIPARIVTNYFSAHDNDANLQMDIFLEEDGNVNSKLTKDSVWNYHCWNEAWMTRPDLPVGFGGWQAVDSTPQENSDGMYRCGPASVQAIKHGHVCFQFDAPFVFAEVNSDLIYITAKKDGTHVVENVDATHIGKLIVTKQIGGDGMMDITDTYKFQEGQEEERLALETALMYGAKKPLNTEGVMKSRSNVDMDFEVENAVLGKDFKLSITFRNNSHNRYTITAYLSANITFYTGVPKAEFKKETFDVTLEPLSFKKEAVLIQAGEYMGQLLEQASLHFFVTARINETRDVLAKQKSTVLTIPEIIIKVRGTQVVGSDMTVTVEFTNPLKETLRNVWVHLDGPGVTRPMKKMFREIRPNSTVQWEEVCRPWVSGHRKLIASMSSDSLRHVYGELDVQIQRRPSM.

Positions 1–27 are disordered; that stretch reads MSETSRTAFGGRRAVPPNNSNAAEDDL. N-acetylserine is present on Ser2. Residues 2–38 constitute a propeptide, activation peptide; the sequence is SETSRTAFGGRRAVPPNNSNAAEDDLPTVELQGVVPR. Active-site residues include Cys315, His374, and Asp397. The Ca(2+) site is built by Asn437, Asp439, Glu486, and Glu491. Residue Asn614 is glycosylated (N-linked (GlcNAc...) asparagine).

The protein belongs to the transglutaminase superfamily. Transglutaminase family. As to quaternary structure, tetramer of two A chains (F13A1) and two B (F13B) chains. Ca(2+) is required as a cofactor. The activation peptide is released by thrombin.

Its subcellular location is the cytoplasm. The protein resides in the secreted. It carries out the reaction L-glutaminyl-[protein] + L-lysyl-[protein] = [protein]-L-lysyl-N(6)-5-L-glutamyl-[protein] + NH4(+). Factor XIII is activated by thrombin and calcium ion to a transglutaminase that catalyzes the formation of gamma-glutamyl-epsilon-lysine cross-links between fibrin chains, thus stabilizing the fibrin clot. Also cross-link alpha-2-plasmin inhibitor, or fibronectin, to the alpha chains of fibrin. This is Coagulation factor XIII A chain (F13A1) from Homo sapiens (Human).